The following is a 172-amino-acid chain: Transmembrane protein 91 (172 aa).

Residues 1–97 are Extracellular-facing; the sequence is MDNSSIQELQ…SPLLPHDHLG (97 aa). The disordered stretch occupies residues 60-86; sequence GLGEPETPDFEDTLSSDSDSDDDGGDR. Residues 65–83 show a composition bias toward acidic residues; sequence ETPDFEDTLSSDSDSDDDG. The helical transmembrane segment at 98 to 118 threads the bilayer; sequence LAVFSVLCCFWPVGIAAFCLA. At 119-139 the chain is on the cytoplasmic side; it reads HKTNKAWAKGDVQGAGAASRR. A helical membrane pass occupies residues 140–160; sequence AFLLGVLAVGLGLCTYAAALV. Over 161-172 the chain is Extracellular; it reads TLAAYLASRDPP.

Belongs to the CD225/Dispanin family.

Its subcellular location is the membrane. The polypeptide is Transmembrane protein 91 (Tmem91) (Mus musculus (Mouse)).